We begin with the raw amino-acid sequence, 125 residues long: Glycine cleavage system H protein (125 aa).

One can recognise a Lipoyl-binding domain in the interval 19 to 101 (EVTVGITDHA…YHEGWLVKLK (83 aa)). K60 carries the N6-lipoyllysine modification.

The protein belongs to the GcvH family. As to quaternary structure, the glycine cleavage system is composed of four proteins: P, T, L and H. (R)-lipoate serves as cofactor.

In terms of biological role, the glycine cleavage system catalyzes the degradation of glycine. The H protein shuttles the methylamine group of glycine from the P protein to the T protein. This chain is Glycine cleavage system H protein, found in Legionella pneumophila (strain Corby).